The sequence spans 237 residues: Phosphoribosylaminoimidazole-succinocarboxamide synthase (237 aa).

The protein belongs to the SAICAR synthetase family.

The enzyme catalyses 5-amino-1-(5-phospho-D-ribosyl)imidazole-4-carboxylate + L-aspartate + ATP = (2S)-2-[5-amino-1-(5-phospho-beta-D-ribosyl)imidazole-4-carboxamido]succinate + ADP + phosphate + 2 H(+). It functions in the pathway purine metabolism; IMP biosynthesis via de novo pathway; 5-amino-1-(5-phospho-D-ribosyl)imidazole-4-carboxamide from 5-amino-1-(5-phospho-D-ribosyl)imidazole-4-carboxylate: step 1/2. This chain is Phosphoribosylaminoimidazole-succinocarboxamide synthase, found in Proteus mirabilis (strain HI4320).